A 58-amino-acid polypeptide reads, in one-letter code: uncharacterized protein (58 aa).

The helical transmembrane segment at 12–32 threads the bilayer; sequence VALVYISVYFFSCISLIVYFF.

The protein localises to the membrane. This is an uncharacterized protein from Saccharomyces cerevisiae (strain ATCC 204508 / S288c) (Baker's yeast).